The following is a 669-amino-acid chain: Bestrophin-3 (669 aa).

Over 1–31 (MTVTYSSKVANATFFGFHRLLLKWRGSIYKL) the chain is Cytoplasmic. Residue Ala-10 coordinates Ca(2+). The chain crosses the membrane as a helical span at residues 32–51 (LYREFIVFAVLYTAISLVYR). Over 52–60 (LLLTGAQKR) the chain is Extracellular. The helical transmembrane segment at 61 to 82 (YFEKLSIYCDRYAEQIPVTFVL) threads the bilayer. Residues 83–237 (GFYVTLVVNR…DWVGIPLVYT (155 aa)) lie on the Cytoplasmic side of the membrane. The chain crosses the membrane as a helical span at residues 238–255 (QVVTLAVYTFFFACLIGR). Residues 256 to 274 (QFLDPTKGYVGHDLDLYVP) are Extracellular-facing. Residues 275-288 (IFTLLQFFFYAGWL) form a helical membrane-spanning segment. Over 289 to 669 (KVAEQLINPF…GTPQRPRTWF (381 aa)) the chain is Cytoplasmic. Residues Gln-293, Asn-296, Asp-301, and Asp-304 each contribute to the Ca(2+) site. 4 disordered regions span residues 399–496 (LSTH…TKMP), 533–560 (QPSGTEQQVEPSGTPPGDPNPQTTSAST), 591–627 (TSLGNLGPDPVSPRDALLLPDTETPSETNGIHPGAGS), and 646–669 (ILEFNNEHTGESPKGTPQRPRTWF). Residues 440 to 451 (NPHRGSPTRKQS) show a composition bias toward basic residues. Residues 475 to 492 (RTSTLQSLSPQSSVRSSP) are compositionally biased toward low complexity. Residues 533 to 543 (QPSGTEQQVEP) are compositionally biased toward polar residues. A compositionally biased stretch (basic and acidic residues) spans 646 to 656 (ILEFNNEHTGE).

Belongs to the anion channel-forming bestrophin (TC 1.A.46) family. Calcium-sensitive chloride channel subfamily. As to expression, expressed in heart. In terms of tissue distribution, expressed in brain, retina/retinal pigment epithelium (RPE) and skeletal muscle. Expressed in acinar cells of parotid glands. Expressed in lung, kidney and testis.

It is found in the cell membrane. The enzyme catalyses chloride(in) = chloride(out). In terms of biological role, ligand-gated anion channel that allows the movement of chloride monoatomic anions across cell membranes when activated by calcium (Ca2+). Its function is as follows. Does not function as calcium-gated chloride channel. This Mus musculus (Mouse) protein is Bestrophin-3 (Best3).